A 294-amino-acid chain; its full sequence is Probable 2-(5''-triphosphoribosyl)-3'-dephosphocoenzyme-A synthase (294 aa).

This sequence belongs to the CitG/MdcB family.

The enzyme catalyses 3'-dephospho-CoA + ATP = 2'-(5''-triphospho-alpha-D-ribosyl)-3'-dephospho-CoA + adenine. This chain is Probable 2-(5''-triphosphoribosyl)-3'-dephosphocoenzyme-A synthase, found in Streptococcus pyogenes serotype M5 (strain Manfredo).